The chain runs to 660 residues: Phosphatidylinositol-3-phosphate phosphatase MTMR7 (660 aa).

In terms of domain architecture, Myotubularin phosphatase spans 126–504; it reads GWLLVDLSEE…FTYKFWNGMY (379 aa). The a 1,2-diacyl-sn-glycero-3-phospho-(1D-myo-inositol-3-phosphate) site is built by N250, N275, and I276. C338 (phosphocysteine intermediate) is an active-site residue. Residues S339, D340, G341, W342, D343, R344, and R384 each coordinate a 1,2-diacyl-sn-glycero-3-phospho-(1D-myo-inositol-3-phosphate). Positions 514-548 form a coiled coil; that stretch reads RQSVTDYLMAVKEESQQLEEELESLEERLEKIQKV. The tract at residues 550–660 is disordered; sequence LHGTKVKSKQ…DSDEAVFLTA (111 aa). Residues 566–596 are compositionally biased toward polar residues; sequence SGFSTSDHSTANTPQDYSGNSKSFPSRSPSQ. Residue T578 is modified to Phosphothreonine. Basic and acidic residues predominate over residues 641–653; the sequence is APSEDSGKDRDSD.

It belongs to the protein-tyrosine phosphatase family. Non-receptor class myotubularin subfamily. In terms of assembly, heterodimer (via C-terminus) with MTMR9 (via coiled coil domain); the interaction enhances MTMR7 catalytic activity. Does not homodimerize. Interacts with RAB1B (in GDP-bound form). As to expression, highly expressed in brain (at protein level). Expressed at low levels in liver, kidney and testis.

It localises to the cytoplasm. It is found in the endomembrane system. It carries out the reaction a 1,2-diacyl-sn-glycero-3-phospho-(1D-myo-inositol-3-phosphate) + H2O = a 1,2-diacyl-sn-glycero-3-phospho-(1D-myo-inositol) + phosphate. The enzyme catalyses 1D-myo-inositol 1,3-bisphosphate + H2O = 1D-myo-inositol 1-phosphate + phosphate. Its activity is regulated as follows. Interaction with MTMR9 increases phosphatase activity. Functionally, lipid phosphatase that specifically dephosphorylates the D-3 position of phosphatidylinositol 3-phosphate (PtdIns(3)P) and inositol 1,3-bisphosphate (Ins(1,3)P2). In Mus musculus (Mouse), this protein is Phosphatidylinositol-3-phosphate phosphatase MTMR7.